The chain runs to 449 residues: N-succinylarginine dihydrolase (449 aa).

Substrate-binding positions include 19-28, Asn-110, and 137-138; these read GGLSYGNVAS and HR. The tract at residues 23–43 is disordered; it reads YGNVASQSNSQQGSNPREAAR. The span at 25–37 shows a compositional bias: polar residues; the sequence is NVASQSNSQQGSN. Residue Glu-174 is part of the active site. Arg-214 is a binding site for substrate. The active site involves His-250. Residues Asp-252 and Asn-365 each coordinate substrate. The active-site Nucleophile is Cys-371.

Belongs to the succinylarginine dihydrolase family. In terms of assembly, homodimer.

The enzyme catalyses N(2)-succinyl-L-arginine + 2 H2O + 2 H(+) = N(2)-succinyl-L-ornithine + 2 NH4(+) + CO2. The protein operates within amino-acid degradation; L-arginine degradation via AST pathway; L-glutamate and succinate from L-arginine: step 2/5. Its function is as follows. Catalyzes the hydrolysis of N(2)-succinylarginine into N(2)-succinylornithine, ammonia and CO(2). This is N-succinylarginine dihydrolase from Pseudomonas entomophila (strain L48).